A 317-amino-acid polypeptide reads, in one-letter code: Trem-like transcript 1 protein (317 aa).

An N-terminal signal peptide occupies residues 1 to 20 (MDCYLLLLLLLLGLAGQGSA). The Ig-like V-type domain maps to 21 to 122 (DSHPEVLQAP…PQTLHRVSLL (102 aa)). The Extracellular segment spans residues 21–175 (DSHPEVLQAP…EFRRRENSIP (155 aa)). Cystine bridges form between Cys39–Cys105 and Cys53–Cys60. Residues 147–166 (TGSLLEDPSLDPSASAGPHE) are disordered. A helical transmembrane segment spans residues 176–196 (LIWGAVLLLALVVVAVVIFAV). At 197-317 (MARKKGNRLV…PPNSQTPPSK (121 aa)) the chain is on the cytoplasmic side. Cys208 carries the S-palmitoyl cysteine lipid modification. The interval 212-278 (QSTGVPGMDP…SQPPLPPKVL (67 aa)) is disordered. Over residues 261 to 275 (SSEPPAPPSQPPLPP) the composition is skewed to pro residues. At Ser283 the chain carries Phosphoserine. Residues 284 to 289 (VTYATV) carry the ITIM motif. The segment at 295–317 (DKGKIASCEPVQDPPNSQTPPSK) is disordered. Over residues 308–317 (PPNSQTPPSK) the composition is skewed to polar residues.

As to quaternary structure, when phosphorylated, interacts with PTPN11. When phosphorylated, interacts with PTPN6. Post-translationally, phosphorylated on tyrosine residues. In terms of tissue distribution, highly expressed in bone marrow leukocytes, splenic megakaryocytes and platelets. Detected in brain, liver and in peritoneal monocytes.

Its subcellular location is the cell membrane. The protein localises to the cytoplasm. Cell surface receptor that may play a role in the innate and adaptive immune response. This is Trem-like transcript 1 protein (Treml1) from Mus musculus (Mouse).